Consider the following 344-residue polypeptide: Heat-inducible transcription repressor HrcA (344 aa).

The protein belongs to the HrcA family.

Negative regulator of class I heat shock genes (grpE-dnaK-dnaJ and groELS operons). Prevents heat-shock induction of these operons. This chain is Heat-inducible transcription repressor HrcA, found in Streptococcus mutans serotype c (strain ATCC 700610 / UA159).